The following is a 79-amino-acid chain: Protein FAM236A (79 aa).

The protein belongs to the FAM236 family.

This is Protein FAM236A from Homo sapiens (Human).